A 20-amino-acid polypeptide reads, in one-letter code: Short cationic peptide-4b (20 aa).

E20 is subject to Glutamic acid 1-amide.

Expressed by the venom gland.

The protein localises to the secreted. This chain is Short cationic peptide-4b, found in Cupiennius salei (American wandering spider).